The chain runs to 656 residues: Kinesin-related protein SMY1 (656 aa).

Residues 27–364 (HIEVILRAIP…LEFGDSIRQI (338 aa)) form the Kinesin motor domain. 114–121 (GPSFSGKS) is an ATP binding site. T583 is modified (phosphothreonine).

It belongs to the TRAFAC class myosin-kinesin ATPase superfamily. Kinesin family.

The protein localises to the cytoplasm. It localises to the cytoskeleton. Its function is as follows. Possible microtubule-based motor that can interact or substitute with myosin 2 (MYO2). In Saccharomyces cerevisiae (strain ATCC 204508 / S288c) (Baker's yeast), this protein is Kinesin-related protein SMY1 (SMY1).